The primary structure comprises 729 residues: Elongation factor 2 (729 aa).

The tr-type G domain occupies 19–262 (EQIRNIAIAA…MVCEHFPNPV (244 aa)). GTP contacts are provided by residues 28 to 35 (AHVDHGKT), 94 to 98 (DTPGH), and 148 to 151 (NKVD). Residue His-597 is modified to Diphthamide.

Belongs to the TRAFAC class translation factor GTPase superfamily. Classic translation factor GTPase family. EF-G/EF-2 subfamily.

The protein localises to the cytoplasm. Its function is as follows. Catalyzes the GTP-dependent ribosomal translocation step during translation elongation. During this step, the ribosome changes from the pre-translocational (PRE) to the post-translocational (POST) state as the newly formed A-site-bound peptidyl-tRNA and P-site-bound deacylated tRNA move to the P and E sites, respectively. Catalyzes the coordinated movement of the two tRNA molecules, the mRNA and conformational changes in the ribosome. The polypeptide is Elongation factor 2 (Natronomonas pharaonis (strain ATCC 35678 / DSM 2160 / CIP 103997 / JCM 8858 / NBRC 14720 / NCIMB 2260 / Gabara) (Halobacterium pharaonis)).